Reading from the N-terminus, the 203-residue chain is 5-formyltetrahydrofolate cyclo-ligase (203 aa).

Residue A2 is modified to N-acetylalanine. Residues 10-14 and R14 contribute to the ATP site; that span reads KRGLR. Substrate contacts are provided by residues L56, E61, and 148 to 152; that span reads RGKGY. 145–153 is an ATP binding site; sequence RLGRGKGYY. 2 residues coordinate Mg(2+): D154 and D189.

This sequence belongs to the 5-formyltetrahydrofolate cyclo-ligase family. As to quaternary structure, monomer. The cofactor is Mg(2+).

The protein resides in the cytoplasm. The enzyme catalyses (6S)-5-formyl-5,6,7,8-tetrahydrofolate + ATP = (6R)-5,10-methenyltetrahydrofolate + ADP + phosphate. Its function is as follows. Contributes to tetrahydrofolate metabolism. Helps regulate carbon flow through the folate-dependent one-carbon metabolic network that supplies carbon for the biosynthesis of purines, thymidine and amino acids. Catalyzes the irreversible conversion of 5-formyltetrahydrofolate (5-CHO-H(4)PteGlu) to yield 5,10-methenyltetrahydrofolate. This chain is 5-formyltetrahydrofolate cyclo-ligase (Mthfs), found in Mus musculus (Mouse).